Reading from the N-terminus, the 79-residue chain is Defensin 2 (79 aa).

An N-terminal signal peptide occupies residues 1-32 (VQKRTIIMEKKMAGFCIFFLILFLAQEYGVEG). Cystine bridges form between C35–C79, C46–C67, and C52–C73.

It belongs to the DEFL family. May form dimers. Post-translationally, not glycosylated. Has 4 disulfide bonds.

Functionally, probably has antifungal activity. In Arachis hypogaea (Peanut), this protein is Defensin 2.